The primary structure comprises 369 residues: Alanine racemase (369 aa).

Catalysis depends on Lys-35, which acts as the Proton acceptor; specific for D-alanine. Lys-35 bears the N6-(pyridoxal phosphate)lysine mark. A substrate-binding site is contributed by Arg-130. Residue Tyr-257 is the Proton acceptor; specific for L-alanine of the active site. Residue Met-305 coordinates substrate.

This sequence belongs to the alanine racemase family. Pyridoxal 5'-phosphate serves as cofactor.

The enzyme catalyses L-alanine = D-alanine. The protein operates within amino-acid biosynthesis; D-alanine biosynthesis; D-alanine from L-alanine: step 1/1. Its function is as follows. Catalyzes the interconversion of L-alanine and D-alanine. May also act on other amino acids. This is Alanine racemase (alr) from Paracidovorax citrulli (strain AAC00-1) (Acidovorax citrulli).